We begin with the raw amino-acid sequence, 869 residues long: Structure-specific endonuclease subunit SLX4 (869 aa).

Residues 40 to 59 (SPLSLPSPTSLLDFLSTSTS) show a composition bias toward low complexity. Disordered regions lie at residues 40 to 79 (SPLS…EVLD), 92 to 116 (NRVV…ESPG), 165 to 199 (KANQ…INDL), 293 to 323 (GLSD…NPPK), 351 to 388 (TLLS…KKNE), 418 to 437 (ANGH…HISN), and 630 to 774 (KTSN…ASET). Residues 63–79 (ARSDTDGDKTQGKEVLD) show a composition bias toward basic and acidic residues. 2 stretches are compositionally biased toward polar residues: residues 165 to 174 (KANQTVSLQP) and 294 to 311 (LSDS…SATS). Residues 312 to 322 (KPRRVKAKNPP) are compositionally biased toward basic residues. Polar residues-rich tracts occupy residues 647–657 (VDESTQGQSLG) and 664–673 (SIPQTATTQV). The span at 688–700 (VPVPSRRSTSTSK) shows a compositional bias: low complexity. Over residues 765–774 (IPSTGTASET) the composition is skewed to polar residues.

This sequence belongs to the SLX4 family. As to quaternary structure, forms a heterodimer with SLX1. In terms of processing, phosphorylated in response to DNA damage.

The protein resides in the nucleus. Regulatory subunit of the SLX1-SLX4 structure-specific endonuclease that resolves DNA secondary structures generated during DNA repair and recombination. Has endonuclease activity towards branched DNA substrates, introducing single-strand cuts in duplex DNA close to junctions with ss-DNA. In Paracoccidioides brasiliensis (strain Pb18), this protein is Structure-specific endonuclease subunit SLX4.